Consider the following 520-residue polypeptide: MSASRTVICLLRNDLRLHDNEVFHWAQRNAEHIIPLYCFDPRHYQGTYHYNFPKTGPFRLRFLLDSVKDLRALLKKHGSTLLVRQGKPEDVVCELIKQLGSVSTVAFHEEVASEEKSVEEKLKEICCQNKVRVQTFWGSTLYHRDDLPFSHIGGLPDVYTQFRKAVEAQGRVRPVLSTPEQVKSPPSGLEEGPIPTFDSLGQTEPLDDCRSAFPCRGGETEALARLKHYFWDTNAVATYKETRNGMIGVDFSTKFSPWLALGCISPRYIYEQIKKYEVERTANQSTYWVIFELLWRDYFKFVALKYGNRIFYMNGLQDKHVPWNTDMKMFDAWKEGRTGVPFVDANMRELALTGFMSNRGRQNVASFLTKDLGLDWRLGAEWFEYLLVDHDVCSNYGNWLYSAGIGNDPRENRKFNMIKQGLDYDNNGDYVRQWVPELRGIKGGDVHTPWTLSNSALSHAQVSLNQTYPCPIITAPEWSRHVNNKSSGPSSSKGRKGSSYTARQHKDRGIDFYFSKNKHF.

In terms of domain architecture, Photolyase/cryptochrome alpha/beta spans 5-141; sequence RTVICLLRND…RVQTFWGSTL (137 aa). Residues 479 to 504 form a disordered region; the sequence is SRHVNNKSSGPSSSKGRKGSSYTARQ.

It belongs to the DNA photolyase class-1 family. FAD is required as a cofactor. Requires (6R)-5,10-methylene-5,6,7,8-tetrahydrofolate as cofactor.

In terms of biological role, may have a photoreceptor function. Has weak cyclobutyl pyrimidine photolyase activity when expressed in E.coli and when tested in vitro. The protein is Cryptochrome DASH (cry-dash) of Danio rerio (Zebrafish).